The chain runs to 391 residues: Elongation factor Tu 1 (391 aa).

The tr-type G domain maps to 10–201 (KLHVNIGTIG…EVDRYIPTPE (192 aa)). Positions 19 to 26 (GHVDHGKT) are G1. 19–26 (GHVDHGKT) provides a ligand contact to GTP. Threonine 26 provides a ligand contact to Mg(2+). The interval 55–59 (GITIS) is G2. Residues 76–79 (DCPG) are G3. Residues 76–80 (DCPGH) and 131–134 (NKVD) each bind GTP. The interval 131 to 134 (NKVD) is G4. Positions 169–171 (SAL) are G5.

It belongs to the TRAFAC class translation factor GTPase superfamily. Classic translation factor GTPase family. EF-Tu/EF-1A subfamily. As to quaternary structure, monomer.

Its subcellular location is the cytoplasm. It carries out the reaction GTP + H2O = GDP + phosphate + H(+). Functionally, GTP hydrolase that promotes the GTP-dependent binding of aminoacyl-tRNA to the A-site of ribosomes during protein biosynthesis. The protein is Elongation factor Tu 1 of Bartonella bacilliformis (strain ATCC 35685 / KC583 / Herrer 020/F12,63).